The primary structure comprises 492 residues: FAD-linked oxidoreductase pgmH (492 aa).

The FAD-binding PCMH-type domain maps to 54-224; it reads SIRLATLVVY…TEFKYRVHKQ (171 aa).

It belongs to the oxygen-dependent FAD-linked oxidoreductase family. The cofactor is FAD.

It participates in pigment biosynthesis. Its pathway is secondary metabolite biosynthesis. Functionally, FAD-linked oxidoreductase; part of the gene cluster that mediates the biosynthesis of pleosporalin A, ascomycone A, as well as a third cryptic naphthoquinone derived pigment, all responsible for the coloration of conidia. Essential for the production of pleosporalin A, but not the 2 other final products. The pathway begins with the biosynthesis of the cyclized heptaketide 3-acetonyl-1,6,8-trihydroxy-2-naphthaldehyde by the NR-PKS pgmA. The C-6 hydroxyl group is further methylated by the O-methyltransferase pgmB to yield fusarubinaldehyde which is in turn oxidized by the cytochrome P450 monooxygenase pgmC at C-9. The C-1 hydroxyl group is then methylated spontaneously. Although pgmE, pgmD and pgmH are essential for the production of pleosporalin A, it is not the case for the 2 other final products and it remains difficult to assign a specific function to each enzyme. PgmF and pgmG seem not to be involved in pigment biosynthesis although they were regulated by the cluster-specific transcription factor pgmR. This chain is FAD-linked oxidoreductase pgmH, found in Aspergillus terreus.